The primary structure comprises 610 residues: Elongation factor 4 (610 aa).

In terms of domain architecture, tr-type G spans 13 to 195; that stretch reads SHIRNFSIVA…AIVHKLPAPK (183 aa). GTP is bound by residues 25–30 and 142–145; these read DHGKST and NKID.

Belongs to the TRAFAC class translation factor GTPase superfamily. Classic translation factor GTPase family. LepA subfamily.

It is found in the cell inner membrane. It carries out the reaction GTP + H2O = GDP + phosphate + H(+). In terms of biological role, required for accurate and efficient protein synthesis under certain stress conditions. May act as a fidelity factor of the translation reaction, by catalyzing a one-codon backward translocation of tRNAs on improperly translocated ribosomes. Back-translocation proceeds from a post-translocation (POST) complex to a pre-translocation (PRE) complex, thus giving elongation factor G a second chance to translocate the tRNAs correctly. Binds to ribosomes in a GTP-dependent manner. The polypeptide is Elongation factor 4 (Rhizobium etli (strain ATCC 51251 / DSM 11541 / JCM 21823 / NBRC 15573 / CFN 42)).